Consider the following 141-residue polypeptide: uncharacterized protein (141 aa).

This is an uncharacterized protein from Borreliella burgdorferi (strain ATCC 35210 / DSM 4680 / CIP 102532 / B31) (Borrelia burgdorferi).